Reading from the N-terminus, the 79-residue chain is Cytochrome b (79 aa).

The next 3 helical transmembrane spans lie at 1–7 (TALFLAM), 31–52 (WLIRNMHANGASFFFICIYLHI), and 67–79 (WNVGVVLLLLTMM). Heme b contacts are provided by histidine 37 and histidine 51.

The protein belongs to the cytochrome b family. As to quaternary structure, the cytochrome bc1 complex contains 3 respiratory subunits (MT-CYB, CYC1 and UQCRFS1), 2 core proteins (UQCRC1 and UQCRC2) and probably 6 low-molecular weight proteins. It depends on heme b as a cofactor.

It is found in the mitochondrion inner membrane. Component of the ubiquinol-cytochrome c reductase complex (complex III or cytochrome b-c1 complex) that is part of the mitochondrial respiratory chain. The b-c1 complex mediates electron transfer from ubiquinol to cytochrome c. Contributes to the generation of a proton gradient across the mitochondrial membrane that is then used for ATP synthesis. In Amphilophus citrinellus (Midas cichlid), this protein is Cytochrome b (mt-cyb).